Reading from the N-terminus, the 242-residue chain is Probable transcriptional regulatory protein BamMC406_2210 (242 aa).

The protein belongs to the TACO1 family.

The protein resides in the cytoplasm. The chain is Probable transcriptional regulatory protein BamMC406_2210 from Burkholderia ambifaria (strain MC40-6).